Reading from the N-terminus, the 349-residue chain is GMP reductase (349 aa).

Residue 108 to 131 (LDFFKIKKIFSLSSELKYICIDVA) coordinates NADP(+). 2 residues coordinate K(+): G181 and G183. Residue C186 is the Thioimidate intermediate of the active site. 216-239 (IISDGGCTVSGDIAKAFGGGADFV) is an NADP(+) binding site.

The protein belongs to the IMPDH/GMPR family. GuaC type 1 subfamily. As to quaternary structure, homotetramer.

It catalyses the reaction IMP + NH4(+) + NADP(+) = GMP + NADPH + 2 H(+). Functionally, catalyzes the irreversible NADPH-dependent deamination of GMP to IMP. It functions in the conversion of nucleobase, nucleoside and nucleotide derivatives of G to A nucleotides, and in maintaining the intracellular balance of A and G nucleotides. In Buchnera aphidicola subsp. Schizaphis graminum (strain Sg), this protein is GMP reductase.